Reading from the N-terminus, the 234-residue chain is uncharacterized protein (234 aa).

The next 3 membrane-spanning stretches (helical) occupy residues 32–52 (GLRT…VSVL), 62–82 (IPAQ…LKEG), and 106–126 (QGLF…NIAL).

It belongs to the MgtC/SapB family.

It localises to the cell membrane. This is an uncharacterized protein from Synechocystis sp. (strain ATCC 27184 / PCC 6803 / Kazusa).